A 332-amino-acid polypeptide reads, in one-letter code: MLFLHFLFLDVVLGGSITENVVQENISFYVMQISSYANKSWVQNHGSGWLDELQTHGWDSESDKIIFLHTWSRGNFSNEELEDLQLLFHAYFSGLALRIQHQPSQLEVKYPFEVQARAGCELHSGEHTKGFIHAAVNGLNFLSYQNKSLVPSPEGGTRAQKFCDLFNTYEGIRETVYYLIRDTCPRFLLGLLDAGKMDLQRQVRPEVWLSSSPNLEPGRLLLACHVSGFYPKPIWVMWMRGAQEQLETKQGDILPHADGTWYLRVTLDVAAREAAGLSCRVRHSSLRDQDIILYWGHGLSVILITFAVIVPLVLLIVLMLLYKKRCTYQGIQ.

Positions 1–17 (MLFLHFLFLDVVLGGSI) are cleaved as a signal peptide. Residues 18–300 (TENVVQENIS…IILYWGHGLS (283 aa)) lie on the Extracellular side of the membrane. N25, N38, N75, and N146 each carry an N-linked (GlcNAc...) asparagine glycan. 2 disulfide bridges follow: C120/C184 and C224/C279. One can recognise an Ig-like domain in the interval 205–292 (PEVWLSSSPN…HSSLRDQDII (88 aa)). The helical transmembrane segment at 301 to 321 (VILITFAVIVPLVLLIVLMLL) threads the bilayer. Residues 322–332 (YKKRCTYQGIQ) lie on the Cytoplasmic side of the membrane.

As to quaternary structure, heterodimer with B2M (beta-2-microglobulin).

It localises to the cell membrane. Its subcellular location is the endosome membrane. In terms of biological role, antigen-presenting protein that binds self and non-self lipid and glycolipid antigens and presents them to T-cell receptors on natural killer T-cells. This Cavia porcellus (Guinea pig) protein is T-cell surface glycoprotein CD1c1 (CD1C1).